The primary structure comprises 75 residues: Small ribosomal subunit protein bS18 (75 aa).

The protein belongs to the bacterial ribosomal protein bS18 family. Part of the 30S ribosomal subunit. Forms a tight heterodimer with protein bS6.

In terms of biological role, binds as a heterodimer with protein bS6 to the central domain of the 16S rRNA, where it helps stabilize the platform of the 30S subunit. The sequence is that of Small ribosomal subunit protein bS18 from Shewanella frigidimarina (strain NCIMB 400).